The primary structure comprises 912 residues: MSALTQSGSIEKPCTILINYDKGDPPQVNEFKQNFEHGTTEQKIETLKKVILYTINGEPIPQLLMPIILYVMPSNDHTIKKLLLIYWEVIEKTHLGKLKSEMILVCNSLLNDLNHPNEFVRGSTLRFLCKLREAEVLEPLVPSVRSNLENRHAYCRRNAVLAIYNIYSHFDYLIPDAPELIYNFLLQEKDASCKRNAFIMLFNCAPEKAVEYLSSVLDEVPSFGDMLQFIVVELIRKVCKTSPSERSKYIKCIFTLLNSSSPAVKYESAGTLLSLSSAPTAVRGAASAYIDLLCNESDNNVKMIVLDKLIEIKKNHSKIMEELVMDILRALSSPNIDICKKVLNIVLDSVTPKNIDEIILFLKKEINKTQSKEFDKGLEYRHILIRTIHVSSLKYPEVLGNVVPLLMEYLGDSYLPSAVDVVIFLREVVETYPSLRELIIKKLIENLSSIKVSKVYRVAVWVIAEYVTCLEDLQYAMTSITNDLEELLKPKQTEEVILETKAKVKIEKVSIQKLIADGDWYLASCISSSLTKLFFRAEQLNIDNADSNKLKAQVMMIISVLINLSKASQVSTSKSAYERMLSCIQVLIDSNATIKKIWLQDCRDSFANYLKYLLIKQSENKKKTEKEVLVKPNNIINIRQLKSKKAFGPVDTEDDLIKAVGNTGEANKDQNEYSKISQLSGFSDPIYVEAYVRVHQYDIVLDISVFNQTNDTLQNVTLELVTLGDLKICERVPPFTMAPREKTSAKASIKVSSTDNGVIMGTIAFDIAGSVSSMSDKNCVILNELHIDVIDYILPANHQYTDVLFRNHWLEFEWENKIPVNTNITDLVKYVHHISKVTNMGILTPEVHLSNDTGILSANLCAKSVFGEDALANICIEKQADGKISGYIRIRAKVQSIAVTLGEKIGNMGMKA.

10 HEAT repeats span residues Pro-59–Gly-96, Ser-100–Glu-135, Val-136–Tyr-172, Ser-244–Ala-281, Asn-300–Asp-337, Cys-339–Asp-375, Glu-397–Ser-434, Lys-441–Ser-479, Leu-550–Ser-575, and Ala-576–Tyr-612.

In terms of assembly, oligomeric complex that consists of at least the alpha, beta, beta', gamma, delta, epsilon and zeta subunits.

The protein resides in the cytoplasm. It is found in the golgi apparatus membrane. Its subcellular location is the cytoplasmic vesicle. It localises to the COPI-coated vesicle membrane. Functionally, the coatomer is a cytosolic protein complex that binds to dilysine motifs and reversibly associates with Golgi non-clathrin-coated vesicles, which further mediate biosynthetic protein transport from the ER, via the Golgi up to the trans Golgi network. Coatomer complex is required for budding from Golgi membranes, and is essential for the retrograde Golgi-to-ER transport of dilysine-tagged proteins. This is Coatomer subunit beta (copb) from Dictyostelium discoideum (Social amoeba).